A 277-amino-acid chain; its full sequence is Glycerol-3-phosphate acyltransferase (277 aa).

5 consecutive transmembrane segments (helical) span residues 3–23 (LFIFLILVGYLMGSINSAIIV), 55–75 (IMVMVFDALKGILPVILAKLL), 79–99 (PVTVAFTALAAVVGHMYPVFF), 111–131 (IGALLAFHFVIGVMVAATWLL), and 155–175 (LILVGNLNIFPPLFMITILVL). A disordered region spans residues 207–277 (SPATSAEQEF…PKTKTVKEKE (71 aa)). Residues 216 to 239 (FPGKEVIDTNIDETEKTEQAEAVK) show a composition bias toward basic and acidic residues. Composition is skewed to basic residues over residues 240–253 (KPKAKKATTKAKKT) and 262–271 (KPRSTKPKTK).

This sequence belongs to the PlsY family. In terms of assembly, probably interacts with PlsX.

It localises to the cell inner membrane. The enzyme catalyses an acyl phosphate + sn-glycerol 3-phosphate = a 1-acyl-sn-glycero-3-phosphate + phosphate. It functions in the pathway lipid metabolism; phospholipid metabolism. Functionally, catalyzes the transfer of an acyl group from acyl-phosphate (acyl-PO(4)) to glycerol-3-phosphate (G3P) to form lysophosphatidic acid (LPA). This enzyme utilizes acyl-phosphate as fatty acyl donor, but not acyl-CoA or acyl-ACP. The chain is Glycerol-3-phosphate acyltransferase from Legionella pneumophila (strain Paris).